The following is a 68-amino-acid chain: Large ribosomal subunit protein bL31 (68 aa).

Residues C17, C19, C37, and C40 each contribute to the Zn(2+) site.

This sequence belongs to the bacterial ribosomal protein bL31 family. Type A subfamily. In terms of assembly, part of the 50S ribosomal subunit. Zn(2+) serves as cofactor.

In terms of biological role, binds the 23S rRNA. The chain is Large ribosomal subunit protein bL31 from Clostridium perfringens (strain ATCC 13124 / DSM 756 / JCM 1290 / NCIMB 6125 / NCTC 8237 / Type A).